The chain runs to 1012 residues: Structural polyprotein (1012 aa).

Aspartate 30 is an a divalent metal cation binding site. One can recognise a Peptidase S50 domain in the interval 513–755 (ADKGYEVVAN…AGRQYDLAMA (243 aa)). The active-site Nucleophile is the serine 652. Lysine 692 is a catalytic residue. Positions 971–1012 (EMKHRNPRRAPPKPKPKPNVPTQRPPGRLGRWIRAVSDEDLE) are disordered. Residues 975-986 (RNPRRAPPKPKP) show a composition bias toward basic residues. An interaction with VP1 protein region spans residues 1003 to 1012 (IRAVSDEDLE).

Homotrimer. A central divalent metal stabilizes the VP2 trimer. Interacts with host ITGA4/ITGB1. As to quaternary structure, homodimer. Interacts (via C-terminus) with VP1 in the cytoplasm. Interacts with VP2. Specific enzymatic cleavages yield mature proteins. The capsid assembly seems to be regulated by polyprotein processing. The protease VP4 cleaves itself off the polyprotein, thus releasing pre-VP2 and VP3 within the infected cell. During capsid assembly, the C-terminus of pre-VP2 is further processed by VP4, giving rise to VP2, the external capsid protein and three small peptides that all stay closely associated with the capsid.

It is found in the virion. The protein localises to the host cytoplasm. Functionally, capsid protein VP2 self assembles to form an icosahedral capsid with a T=13 symmetry, about 70 nm in diameter, and consisting of 260 VP2 trimers. The capsid encapsulates the genomic dsRNA. VP2 is also involved in attachment and entry into the host cell by interacting with host ITGA4/ITGB1. In terms of biological role, the precursor of VP2 plays an important role in capsid assembly. First, pre-VP2 and VP2 oligomers assemble to form a procapsid. Then, the pre-VP2 intermediates may be processed into VP2 proteins by proteolytic cleavage mediated by VP4 to obtain the mature virion. The final capsid is composed of pentamers and hexamers but VP2 has a natural tendency to assemble into all-pentameric structures. Therefore pre-VP2 may be required to allow formation of the hexameric structures. Its function is as follows. Protease VP4 is a serine protease that cleaves the polyprotein into its final products. Pre-VP2 is first partially cleaved, and may be completely processed by VP4 upon capsid maturation. Capsid protein VP3 plays a key role in virion assembly by providing a scaffold for the capsid made of VP2. May self-assemble to form a T=4-like icosahedral inner-capsid composed of at least 180 trimers. Plays a role in genomic RNA packaging by recruiting VP1 into the capsid and interacting with the dsRNA genome segments to form a ribonucleoprotein complex. Additionally, the interaction of the VP3 C-terminal tail with VP1 removes the inherent structural blockade of the polymerase active site. Thus, VP3 can also function as a transcriptional activator. Functionally, structural peptide 1 is a small peptide derived from pre-VP2 C-terminus. It destabilizes and perforates cell membranes, suggesting a role during entry. In terms of biological role, structural peptide 2 is a small peptide derived from pre-VP2 C-terminus. It is not essential for the virus viability, but viral growth is affected when missing. Its function is as follows. Structural peptide 3 is a small peptide derived from pre-VP2 C-terminus. It is not essential for the virus viability, but viral growth is affected when missing. This is Structural polyprotein from Avian infectious bursal disease virus (isolate Chicken/UK/UK661/1989) (IBDV).